The primary structure comprises 131 residues: Con-Ins Q1 (131 aa).

An N-terminal signal peptide occupies residues 1–24 (MTTSSYFLLVALGLLLYLCQSSFG). Disulfide bonds link C29/C107, C41/C110, C53/C123, and C109/C114. The propeptide at 59-92 (LQGGTDDARKKRGRASLLRKRRGFLSMLKARAKR) is c peptide. The residue at position 118 (E118) is a 4-carboxyglutamate; partial. Position 130 is a serine amide (S130).

Belongs to the insulin family. Heterodimer of A and B chains; disulfide-linked. Expressed by the venom gland.

The protein resides in the secreted. This venom insulin facilitates prey capture by rapidly inducing hypoglycemic shock. Intraperitoneal injection of this peptide into zebrafish lowers blood glucose with the same potency than human insulin. In vivo, when applied to water, this peptide reduces overall locomotor activity of zebrafish larvae, observed as a significant decrease in the percentage of time spent swimming and movement frequency. The protein is Con-Ins Q1 of Conus quercinus (Oak cone).